Here is a 776-residue protein sequence, read N- to C-terminus: Microtubule-associated protein tau (776 aa).

The span at 1–26 (MAEPRQEFDVMEDHAGTYGLGDRKDQ) shows a compositional bias: basic and acidic residues. Positions 1–591 (MAEPRQEFDV…PVPMPDLKNV (591 aa)) are disordered. Ala-2 bears the N-acetylalanine mark. Residues Tyr-18 and Tyr-29 each carry the phosphotyrosine modification. Lys-44 participates in a covalent cross-link: Glycyl lysine isopeptide (Lys-Gly) (interchain with G-Cter in ubiquitin). Phosphoserine occurs at positions 46 and 61. Positions 61-71 (SETSDAKSTPT) are enriched in polar residues. Residues Thr-69, Thr-71, and Thr-111 each carry the phosphothreonine modification. Composition is skewed to basic and acidic residues over residues 179 to 189 (EGGRHAPELLK) and 207 to 216 (GGKERPGIKE). Residues 217-228 (EVDEDRDVDESS) show a composition bias toward acidic residues. Basic and acidic residues predominate over residues 314-323 (EQAHSEEHLG). Positions 325–340 (AAFPGAPGEGPEAQGP) are enriched in low complexity. 2 stretches are compositionally biased toward basic and acidic residues: residues 344–356 (EDTK…EPSE) and 381–393 (KSKD…DKKA). Residues 442-453 (VSSVTXRTGSSG) show a composition bias toward low complexity. A compositionally biased stretch (basic and acidic residues) spans 455–466 (KEMKLKGADGKT). Thr-470 is subject to Phosphothreonine. At Arg-472 the chain carries Omega-N-methylarginine. At Lys-480 the chain carries N6,N6-dimethyllysine; alternate. The residue at position 480 (Lys-480) is an N6-acetyllysine; alternate. A phosphothreonine mark is found at Thr-486, Thr-492, and Thr-498. Phosphoserine is present on residues Ser-502, Ser-526, and Ser-530. Positions 517–528 (KSERGEPPKSGD) are enriched in basic and acidic residues. A compositionally biased stretch (low complexity) spans 529 to 549 (RSGYSSPGSPGTPGSRSRTPS). Tyr-532 bears the Phosphotyrosine mark. A phosphoserine mark is found at Ser-533, Ser-534, and Ser-537. Residues Thr-540 and Thr-547 each carry the phosphothreonine modification. At Ser-549 the chain carries Phosphoserine. Thr-552 is modified (phosphothreonine). An N6-acetyllysine modification is found at Lys-560. Thr-566 is modified (phosphothreonine). Phosphoserine occurs at positions 570 and 572. 4 Tau/MAP repeats span residues 579–609 (QTAP…GGGK), 610–640 (VQII…GGGS), 641–671 (VQIV…GGGQ), and 672–703 (VEVK…GGGN). Lys-589 is covalently cross-linked (Glycyl lysine isopeptide (Lys-Gly) (interchain with G-Cter in ubiquitin)). N6-acetyllysine; alternate is present on Lys-594. Residue Lys-594 is modified to N6-methyllysine; alternate. A Glycyl lysine isopeptide (Lys-Gly) (interchain with G-Cter in ubiquitin); alternate cross-link involves residue Lys-594. Ser-597 carries the phosphoserine modification. Lys-602 participates in a covalent cross-link: Glycyl lysine isopeptide (Lys-Gly) (interchain with G-Cter in ubiquitin). N6-acetyllysine; alternate is present on Lys-616. Lys-616 is covalently cross-linked (Glycyl lysine isopeptide (Lys-Gly) (interchain with G-Cter in ubiquitin); alternate). 2 positions are modified to phosphoserine: Ser-620 and Ser-624. Residue Lys-625 is modified to N6-acetyllysine. At Ser-628 the chain carries Phosphoserine. The residue at position 633 (Lys-633) is an N6-acetyllysine; alternate. Residue Lys-633 forms a Glycyl lysine isopeptide (Lys-Gly) (interchain with G-Cter in ubiquitin); alternate linkage. Position 640 is a phosphoserine (Ser-640). Lys-646 bears the N6,N6-dimethyllysine; alternate mark. Residues Lys-646, Lys-652, and Lys-656 each carry the N6-acetyllysine; alternate modification. Glycyl lysine isopeptide (Lys-Gly) (interchain with G-Cter in ubiquitin); alternate cross-links involve residues Lys-646, Lys-652, and Lys-656. Residue Ser-659 is modified to Phosphoserine. N6-acetyllysine; alternate occurs at positions 666, 678, and 682. Residues Lys-666, Lys-678, and Lys-682 each participate in a glycyl lysine isopeptide (Lys-Gly) (interchain with G-Cter in ubiquitin); alternate cross-link. The residue at position 684 (Arg-684) is an Omega-N-methylarginine. A Phosphoserine modification is found at Ser-687. Lys-688 participates in a covalent cross-link: Glycyl lysine isopeptide (Lys-Gly) (interchain with G-Cter in ubiquitin). Ser-691 is subject to Phosphoserine. Lys-704 is subject to N6-acetyllysine; alternate. Lys-704 participates in a covalent cross-link: Glycyl lysine isopeptide (Lys-Gly) (interchain with G-Cter in ubiquitin); alternate. Lys-710 is covalently cross-linked (Glycyl lysine isopeptide (Lys-Gly) (interchain with G-Cter in ubiquitin)). Position 720 is an N6-acetyllysine; alternate (Lys-720). Lys-720 is covalently cross-linked (Glycyl lysine isopeptide (Lys-Gly) (interchain with G-Cter in ubiquitin); alternate). Tyr-729 carries the phosphotyrosine modification. Ser-731 and Ser-735 each carry phosphoserine. Residues 733–752 (VVSGDTSPRHLSNVSSTGSI) form a disordered region. Residues 736-751 (GDTSPRHLSNVSSTGS) are compositionally biased toward polar residues. Thr-738 carries the post-translational modification Phosphothreonine. Ser-739, Ser-744, Ser-751, and Ser-757 each carry phosphoserine. Thr-762 carries the phosphothreonine modification.

In terms of assembly, interacts with MARK1, MARK2, MARK3 and MARK4. Interacts with SQSTM1 when polyubiquitinated. Interacts with PSMC2 through SQSTM1. Interacts with FKBP4. Binds to CSNK1D. Interacts with SGK1. Interacts with EPM2A; the interaction dephosphorylates MAPT at Ser-396. Interacts with PIN1. Interacts with LRRK2. Interacts with LRP1, leading to endocytosis; this interaction is reduced in the presence of LRPAP1/RAP. Post-translationally, polyubiquitinated. Requires functional TRAF6 and may provoke SQSTM1-dependent degradation by the proteasome. Phosphorylation at various serine and threonine residues in S-P or T-P motifs by proline-directed protein kinases (PDPK1, CDK1, CDK5, GSK3, MAPK) (a few sites per protein in interphase, more in mitosis), and at serine residues in K-X-G-S motifs by MAP/microtubule affinity-regulating kinase (MARK1, MARK2, MARK3 or MARK4), causing detachment from microtubules, and their disassembly. Phosphorylation at Ser-597 by BRSK1 and BRSK2 in neurons affects ability to bind microtubules and plays a role in neuron polarization. Phosphorylated by PHK. Dephosphorylation at several serine and threonine residues by the serine/threonine phosphatase PPP5C.

Its subcellular location is the cytoplasm. The protein localises to the cytosol. It is found in the cell membrane. The protein resides in the cytoskeleton. It localises to the cell projection. Its subcellular location is the axon. The protein localises to the dendrite. Promotes microtubule assembly and stability, and might be involved in the establishment and maintenance of neuronal polarity. The C-terminus binds axonal microtubules while the N-terminus binds neural plasma membrane components, suggesting that tau functions as a linker protein between both. Axonal polarity is predetermined by tau localization (in the neuronal cell) in the domain of the cell body defined by the centrosome. The short isoforms allow plasticity of the cytoskeleton whereas the longer isoforms may preferentially play a role in its stabilization. The protein is Microtubule-associated protein tau (MAPT) of Hylobates lar (Lar gibbon).